A 360-amino-acid chain; its full sequence is (+)-6a-hydroxymaackiain 3-O-methyltransferase 2 (360 aa).

S-adenosyl-L-methionine is bound by residues 202-205 (VAGG), Asp226, 226-227 (DQ), 246-247 (DM), and Lys260. His264 functions as the Proton acceptor in the catalytic mechanism.

The protein belongs to the class I-like SAM-binding methyltransferase superfamily. Cation-independent O-methyltransferase family. COMT subfamily.

It catalyses the reaction (+)-6a-hydroxymaackiain + S-adenosyl-L-methionine = (+)-pisatin + S-adenosyl-L-homocysteine + H(+). Its function is as follows. 3-O-methyltransferase involved in the phytoalexin pisatin biosynthesis. Can use (+)-6a-hydroxymaackiain, (+)-maackiain and with a lower activity (+)-medicarpin and 2,7,4'-trihydroxyisoflavanone as substrates, but not (-)-6a-hydroxymaackiain, daidzein, formononetin or isoliquiritigenin. In Pisum sativum (Garden pea), this protein is (+)-6a-hydroxymaackiain 3-O-methyltransferase 2 (HMM2).